The following is a 159-amino-acid chain: Mediator of RNA polymerase II transcription subunit 10 (159 aa).

The segment at serine 54–leucine 77 is disordered.

The protein belongs to the Mediator complex subunit 10 family. As to quaternary structure, component of the Mediator complex.

The protein localises to the nucleus. Its function is as follows. Component of the Mediator complex, a coactivator involved in the regulated transcription of nearly all RNA polymerase II-dependent genes. Mediator functions as a bridge to convey information from gene-specific regulatory proteins to the basal RNA polymerase II transcription machinery. Mediator is recruited to promoters by direct interactions with regulatory proteins and serves as a scaffold for the assembly of a functional preinitiation complex with RNA polymerase II and the general transcription factors. This chain is Mediator of RNA polymerase II transcription subunit 10 (nut2), found in Aspergillus fumigatus (strain ATCC MYA-4609 / CBS 101355 / FGSC A1100 / Af293) (Neosartorya fumigata).